The primary structure comprises 684 residues: Putative glucan endo-1,3-beta-glucosidase btgC (684 aa).

The segment covering 1–10 (MAGVNRSFSY) has biased composition (polar residues). 3 disordered regions span residues 1–38 (MAGVNRSFSYSRGDDALLRDDEREISPLRSAEDGLYST), 124–143 (AERDFNTTGSDNPYIPAPPD), and 157–182 (DSYSSHTGLGAGAPFAEHSTPGTTPS). Residues 1-302 (MAGVNRSFSY…HIIGGGSRKR (302 aa)) are Cytoplasmic-facing. Residues 12 to 32 (RGDDALLRDDEREISPLRSAE) are compositionally biased toward basic and acidic residues. A helical; Signal-anchor for type II membrane protein transmembrane segment spans residues 303–323 (GWIVGLILAAVIVAAIVGGAV). Residues 324-684 (GGILGHQEHD…IPDCGGKTIT (361 aa)) are Extracellular-facing. Residues 330 to 358 (QEHDGDTSSSSSSSSSSGTGSGGSDKGDG) are disordered. A compositionally biased stretch (low complexity) spans 336–347 (TSSSSSSSSSSG). N-linked (GlcNAc...) asparagine glycans are attached at residues Asn404, Asn427, Asn455, and Asn474. The active-site Proton donor is the Glu487. Glu586 acts as the Nucleophile in catalysis. N-linked (GlcNAc...) asparagine glycosylation is present at Asn631.

The protein belongs to the glycosyl hydrolase 17 family.

It is found in the cell membrane. The catalysed reaction is Hydrolysis of (1-&gt;3)-beta-D-glucosidic linkages in (1-&gt;3)-beta-D-glucans.. Glucanases play a role in cell expansion during growth, in cell-cell fusion during mating, and in spore release during sporulation. This enzyme may be involved in beta-glucan degradation. Active on laminarin and lichenan. The sequence is that of Putative glucan endo-1,3-beta-glucosidase btgC (btgC) from Aspergillus niger (strain ATCC MYA-4892 / CBS 513.88 / FGSC A1513).